The primary structure comprises 178 residues: Ribosomal RNA small subunit methyltransferase G (178 aa).

S-adenosyl-L-methionine is bound by residues glycine 54, leucine 59, 105 to 106, and arginine 120; that span reads LE.

This sequence belongs to the methyltransferase superfamily. RNA methyltransferase RsmG family.

The protein resides in the cytoplasm. It carries out the reaction guanosine(527) in 16S rRNA + S-adenosyl-L-methionine = N(7)-methylguanosine(527) in 16S rRNA + S-adenosyl-L-homocysteine. In terms of biological role, specifically methylates the N7 position of guanine in position 527 of 16S rRNA. The chain is Ribosomal RNA small subunit methyltransferase G from Helicobacter pylori (strain HPAG1).